The sequence spans 1391 residues: Periaxin (1391 aa).

S7 is modified (phosphoserine). Positions 16 to 99 constitute a PDZ domain; sequence LVEIIVETEA…YKVSFCLKRT (84 aa). Positions 70–84 match the Nuclear export signal motif; that stretch reads VFFENFKYEDALRLL. The Nuclear localization signal motif lies at 118-196; the sequence is KGPRAKVAKL…RLQLPRLRVR (79 aa). S243 carries the phosphoserine modification. A run of 12 repeats spans residues 432-436, 440-444, 448-452, 456-460, 464-468, 469-473, 474-478, 482-486, 487-491, 495-499, 500-504, and 508-512. The tract at residues 432-719 is 45 X 5 AA approximate tandem repeats of [LVMGIED]-[PQSKHARMI]-[EDKLVTR]-[LIVMAP]-[AQKHRPEVSD]; that may have a tripeptide spacer of [LVIDEA]-[PMSVI]-[KEATDQ]; it reads GPEVKAPTGP…MQVSQVPEVQ (288 aa). A 13; approximate repeat occupies 513–517; it reads WPEMA. 32 tandem repeats follow at residues 521 to 525, 526 to 530, 534 to 538, 539 to 543, 547 to 551, 552 to 556, 560 to 564, 565 to 569, 573 to 577, 578 to 582, 583 to 587, 591 to 595, 596 to 600, 601 to 605, 609 to 613, 614 to 618, 619 to 623, 627 to 631, 632 to 636, 637 to 641, 645 to 649, 650 to 654, 655 to 659, 663 to 667, 671 to 675, 676 to 680, 684 to 688, 689 to 693, 697 to 701, 702 to 706, 707 to 711, and 715 to 719. Residues S848, S979, S1028, S1279, S1283, S1285, S1293, S1331, and S1337 each carry the phosphoserine modification. Positions 1267 to 1366 are disordered; sequence LPRVGFSQSE…DREEGGFRVR (100 aa). Residues 1275–1285 are compositionally biased toward low complexity; sequence SESVSGEGSPS. Residues 1354–1363 show a composition bias toward basic and acidic residues; sequence GSRDREEGGF. The residue at position 1369 (S1369) is a Phosphoserine.

It belongs to the periaxin family. In terms of assembly, homodimer (via PDZ domain). Interacts with SCN10A. Found in a complex with SCN10A. Interacts with DRP2. Identified in a dystroglycan complex that contains at least PRX, DRP2, UTRN, DMD and DAG1. Detected in a complex composed of at least EZR, AHNAK, PPL and PRX. Identified in a complex with EZR, AHNAK, BFSP1, BFSP2, ANK2, PLEC, VIM and spectrin. In terms of tissue distribution, detected in myelinating Schwann cells in intramuscular nerves in triangularis sterni. Detected in sciatic nerve. Detected in eye lens fiber cells. Isoform 1 is detected in myelinating Schwann cells in sciatic nerve. Isoform 2 is detected in myelinating Schwann cells in sciatic nerve (at protein level). Detected in sciatic nerve.

Its subcellular location is the cell membrane. It localises to the cell junction. The protein resides in the nucleus. The protein localises to the cytoplasm. Scaffolding protein that functions as part of a dystroglycan complex in Schwann cells, and as part of EZR and AHNAK-containing complexes in eye lens fiber cells. Required for the maintenance of the peripheral myelin sheath that is essential for normal transmission of nerve impulses and normal perception of sensory stimuli. Required for normal transport of MBP mRNA from the perinuclear to the paranodal regions. Required for normal remyelination after nerve injury. Required for normal elongation of Schwann cells and normal length of the internodes between the nodes of Ranvier. The demyelinated nodes of Ranvier permit saltatory transmission of nerve impulses; shorter internodes cause slower transmission of nerve impulses. Required for the formation of appositions between the abaxonal surface of the myelin sheath and the Schwann cell plasma membrane; the Schwann cell cytoplasm is restricted to regions between these appositions. Required for the formation of Cajal bands and of Schmidt-Lanterman incisures that correspond to short, cytoplasm-filled regions on myelinated nerves. Recruits DRP2 to the Schwann cell plasma membrane. Required for normal protein composition of the eye lens fiber cell plasma membrane and normal eye lens fiber cell morphology. This is Periaxin (Prx) from Mus musculus (Mouse).